The sequence spans 598 residues: Sulfoacetaldehyde acetyltransferase (598 aa).

The protein belongs to the TPP enzyme family. As to quaternary structure, homotetramer. Requires Mg(2+) as cofactor. Thiamine diphosphate is required as a cofactor.

Its subcellular location is the cytoplasm. The enzyme catalyses acetyl phosphate + sulfite + H(+) = sulfoacetaldehyde + phosphate. It functions in the pathway organosulfur degradation; taurine degradation via aerobic pathway; acetyl phosphate and sulfite from taurine: step 2/2. This is Sulfoacetaldehyde acetyltransferase from Castellaniella defragrans (Alcaligenes defragrans).